Consider the following 169-residue polypeptide: Protein GrpE (169 aa).

Residues 1 to 25 (MSEEKQNGQIQEETVENSENQNNEL) form a disordered region. The segment covering 7 to 23 (NGQIQEETVENSENQNN) has biased composition (polar residues).

It belongs to the GrpE family. In terms of assembly, homodimer.

It is found in the cytoplasm. Functionally, participates actively in the response to hyperosmotic and heat shock by preventing the aggregation of stress-denatured proteins, in association with DnaK and GrpE. It is the nucleotide exchange factor for DnaK and may function as a thermosensor. Unfolded proteins bind initially to DnaJ; upon interaction with the DnaJ-bound protein, DnaK hydrolyzes its bound ATP, resulting in the formation of a stable complex. GrpE releases ADP from DnaK; ATP binding to DnaK triggers the release of the substrate protein, thus completing the reaction cycle. Several rounds of ATP-dependent interactions between DnaJ, DnaK and GrpE are required for fully efficient folding. In Campylobacter lari (strain RM2100 / D67 / ATCC BAA-1060), this protein is Protein GrpE.